A 321-amino-acid chain; its full sequence is Ribosomal RNA small subunit methyltransferase H (321 aa).

Residues 44-46, Asp-64, Phe-88, Asp-109, and Gln-116 contribute to the S-adenosyl-L-methionine site; that span reads GGH.

This sequence belongs to the methyltransferase superfamily. RsmH family.

It is found in the cytoplasm. It catalyses the reaction cytidine(1402) in 16S rRNA + S-adenosyl-L-methionine = N(4)-methylcytidine(1402) in 16S rRNA + S-adenosyl-L-homocysteine + H(+). Specifically methylates the N4 position of cytidine in position 1402 (C1402) of 16S rRNA. This Methylobacillus flagellatus (strain ATCC 51484 / DSM 6875 / VKM B-1610 / KT) protein is Ribosomal RNA small subunit methyltransferase H.